The primary structure comprises 737 residues: DNA topoisomerase 4 subunit A (737 aa).

The Topo IIA-type catalytic domain occupies 32 to 496; it reads LPDVRDGLKP…SFEEVTLTNQ (465 aa). Catalysis depends on Tyr-120, which acts as the O-(5'-phospho-DNA)-tyrosine intermediate.

Belongs to the type II topoisomerase GyrA/ParC subunit family. ParC type 1 subfamily. Heterotetramer composed of ParC and ParE.

The protein resides in the cell membrane. The enzyme catalyses ATP-dependent breakage, passage and rejoining of double-stranded DNA.. Topoisomerase IV is essential for chromosome segregation. It relaxes supercoiled DNA. Performs the decatenation events required during the replication of a circular DNA molecule. The chain is DNA topoisomerase 4 subunit A from Rickettsia felis (strain ATCC VR-1525 / URRWXCal2) (Rickettsia azadi).